The chain runs to 213 residues: 2-dehydro-3-deoxy-phosphogluconate aldolase (213 aa).

Catalysis depends on Glu45, which acts as the Proton acceptor. Pyruvate is bound by residues Arg49, Thr73, and Lys133. Catalysis depends on Lys133, which acts as the Schiff-base intermediate with substrate.

This sequence belongs to the KHG/KDPG aldolase family. Homotrimer.

The protein resides in the cytoplasm. It catalyses the reaction 2-dehydro-3-deoxy-6-phospho-D-gluconate = D-glyceraldehyde 3-phosphate + pyruvate. Its pathway is carbohydrate acid metabolism; 2-dehydro-3-deoxy-D-gluconate degradation; D-glyceraldehyde 3-phosphate and pyruvate from 2-dehydro-3-deoxy-D-gluconate: step 2/2. Functionally, involved in the degradation of glucose via the Entner-Doudoroff pathway. Catalyzes the reversible, stereospecific retro-aldol cleavage of 2-keto-3-deoxy-6-phosphogluconate (KDPG) to pyruvate and D-glyceraldehyde-3-phosphate. This Dickeya dadantii (strain 3937) (Erwinia chrysanthemi (strain 3937)) protein is 2-dehydro-3-deoxy-phosphogluconate aldolase (eda).